A 421-amino-acid polypeptide reads, in one-letter code: Ethanolamine-phosphate cytidylyltransferase (421 aa).

The chain crosses the membrane as a helical span at residues 8–28 (IVGSCIVGGAAFAVGASFLHL). Residues 203-227 (SRSSLQRQFSHGHSSPKFEDGASSA) form a disordered region. A compositionally biased stretch (polar residues) spans 204-215 (RSSLQRQFSHGH). Residues 262-263 (AF), 270-273 (HVEI), R298, 346-349 (HGTV), and 377-381 (SPLDI) contribute to the CTP site. The interval 402–421 (AKKEASEKKYYEQKSFVSGD) is disordered. Residues 403 to 413 (KKEASEKKYYE) show a composition bias toward basic and acidic residues. S416 bears the Phosphoserine mark.

It belongs to the cytidylyltransferase family. In terms of tissue distribution, expressed in root tip, lateral root primordia, leaves, shoot apex, stem vascular bundles, pollen and embryos.

The protein localises to the mitochondrion outer membrane. It carries out the reaction phosphoethanolamine + CTP + H(+) = CDP-ethanolamine + diphosphate. The protein operates within phospholipid metabolism; phosphatidylethanolamine biosynthesis; phosphatidylethanolamine from ethanolamine: step 2/3. In terms of biological role, plays an important role in the biosynthesis of the phospholipid phosphatidylethanolamine. Catalyzes the formation of CDP-ethanolamine. Essential for early embryonic development. The polypeptide is Ethanolamine-phosphate cytidylyltransferase (Arabidopsis thaliana (Mouse-ear cress)).